A 530-amino-acid polypeptide reads, in one-letter code: Hyccin 2 (530 aa).

Residues Thr-30 and Thr-306 each carry the phosphothreonine modification. Ser-321 and Ser-341 each carry phosphoserine. The segment at 328–410 (RREGAEGVNG…DSVVRKQYVQ (83 aa)) is disordered. Residues 353-373 (SGASLSSQPIGTKPSSSSQRG) show a composition bias toward polar residues. Residues Ser-430, Ser-442, Ser-444, and Ser-491 each carry the phosphoserine modification. The tract at residues 502–530 (EGKELLSPGAPLTKQSRSPSFNMQLISQV) is disordered. A compositionally biased stretch (polar residues) spans 514-530 (TKQSRSPSFNMQLISQV).

It belongs to the Hyccin family. In terms of assembly, component of a phosphatidylinositol 4-kinase (PI4K) complex, composed of PI4KA, EFR3 (EFR3A or EFR3B), TTC7 (TTC7A or TTC7B) and HYCC (HYCC1 or HYCC2).

The protein resides in the cytoplasm. Its subcellular location is the cytosol. The protein localises to the cell membrane. Its function is as follows. Component of a complex required to localize phosphatidylinositol 4-kinase (PI4K) to the plasma membrane. The sequence is that of Hyccin 2 from Homo sapiens (Human).